The chain runs to 191 residues: Ribonuclease M5 1 (191 aa).

A Toprim domain is found at 10 to 93; sequence KEVIVVEGKD…AFLTKHDAAP (84 aa). Mg(2+) contacts are provided by E16, D62, and D64.

It belongs to the ribonuclease M5 family. Mg(2+) is required as a cofactor.

The protein resides in the cytoplasm. The enzyme catalyses Endonucleolytic cleavage of RNA, removing 21 and 42 nucleotides, respectively, from the 5'- and 3'-termini of a 5S-rRNA precursor.. Required for correct processing of both the 5' and 3' ends of 5S rRNA precursor. Cleaves both sides of a double-stranded region yielding mature 5S rRNA in one step. The sequence is that of Ribonuclease M5 1 from Ligilactobacillus salivarius (strain CECT 5713) (Lactobacillus salivarius).